The primary structure comprises 1142 residues: Error-prone DNA polymerase (1142 aa).

The segment at 291 to 361 is disordered; that stretch reads TSSPAQAARE…GTGAAAGTDR (71 aa). 2 stretches are compositionally biased toward low complexity: residues 311–320 and 327–344; these read LRASLPAERP and GPAA…PGEP. The span at 345 to 355 shows a compositional bias: gly residues; it reads GLAGAGGGTGA.

Belongs to the DNA polymerase type-C family. DnaE2 subfamily.

The protein resides in the cytoplasm. The enzyme catalyses DNA(n) + a 2'-deoxyribonucleoside 5'-triphosphate = DNA(n+1) + diphosphate. DNA polymerase involved in damage-induced mutagenesis and translesion synthesis (TLS). It is not the major replicative DNA polymerase. The sequence is that of Error-prone DNA polymerase from Anaeromyxobacter dehalogenans (strain 2CP-1 / ATCC BAA-258).